The primary structure comprises 561 residues: ATP-dependent rRNA helicase RRP3 (561 aa).

Low complexity-rich tracts occupy residues 1–23 and 30–45; these read MPKA…SSNS and ASSP…PSTS. Positions 1 to 109 are disordered; it reads MPKASASSAK…DEKKVATIAD (109 aa). A compositionally biased stretch (basic and acidic residues) spans 100-109; sequence DEKKVATIAD. The short motif at 114–142 is the Q motif element; the sequence is VEFSDLGVIPQIVEACTNMGFKHPTPIQV. The Helicase ATP-binding domain maps to 145–316; it reads IPEALQARDV…RASLKNPVRV (172 aa). 158 to 165 is a binding site for ATP; it reads AQTGSGKT. A DEAD box motif is present at residues 264-267; it reads DEAD. In terms of domain architecture, Helicase C-terminal spans 339-487; that stretch reads HKDTYLVHLA…EFPGGNDKEA (149 aa). Residues 506 to 561 are disordered; sequence LKDKGVGSAGGSGKRKRKMDGKYGDDMDRDDDQVQAGLPVSGNGRHQNQNRKKGRR.

Belongs to the DEAD box helicase family. DDX47/RRP3 subfamily. In terms of assembly, interacts with the SSU processome.

The protein resides in the nucleus. The enzyme catalyses ATP + H2O = ADP + phosphate + H(+). In terms of biological role, ATP-dependent rRNA helicase required for pre-ribosomal RNA processing. Involved in the maturation of the 35S-pre-rRNA and to its cleavage to mature 18S rRNA. The protein is ATP-dependent rRNA helicase RRP3 of Mycosarcoma maydis (Corn smut fungus).